A 366-amino-acid chain; its full sequence is Ribosomal RNA large subunit methyltransferase M (366 aa).

Residues S188, 221 to 224, D240, D260, and D277 each bind S-adenosyl-L-methionine; that span reads CPGG. Catalysis depends on K306, which acts as the Proton acceptor.

Belongs to the class I-like SAM-binding methyltransferase superfamily. RNA methyltransferase RlmE family. RlmM subfamily. In terms of assembly, monomer.

It is found in the cytoplasm. The enzyme catalyses cytidine(2498) in 23S rRNA + S-adenosyl-L-methionine = 2'-O-methylcytidine(2498) in 23S rRNA + S-adenosyl-L-homocysteine + H(+). In terms of biological role, catalyzes the 2'-O-methylation at nucleotide C2498 in 23S rRNA. This Musicola paradisiaca (strain Ech703) (Dickeya paradisiaca) protein is Ribosomal RNA large subunit methyltransferase M.